We begin with the raw amino-acid sequence, 341 residues long: L-threonine 3-dehydrogenase (341 aa).

C38 contacts Zn(2+). Catalysis depends on charge relay system residues T40 and H43. Residues H63, E64, C93, C96, C99, and C107 each contribute to the Zn(2+) site. Residues I175, D195, R200, 262–264, and 286–287 each bind NAD(+); these read LGI and IY.

This sequence belongs to the zinc-containing alcohol dehydrogenase family. As to quaternary structure, homotetramer. Requires Zn(2+) as cofactor.

Its subcellular location is the cytoplasm. The enzyme catalyses L-threonine + NAD(+) = (2S)-2-amino-3-oxobutanoate + NADH + H(+). It functions in the pathway amino-acid degradation; L-threonine degradation via oxydo-reductase pathway; glycine from L-threonine: step 1/2. In terms of biological role, catalyzes the NAD(+)-dependent oxidation of L-threonine to 2-amino-3-ketobutyrate. This is L-threonine 3-dehydrogenase from Enterobacter sp. (strain 638).